We begin with the raw amino-acid sequence, 272 residues long: 3-methyl-2-oxobutanoate hydroxymethyltransferase (272 aa).

Positions 43 and 82 each coordinate Mg(2+). 3-methyl-2-oxobutanoate-binding positions include 43 to 44 (DS), D82, and K112. Mg(2+) is bound at residue E114. The Proton acceptor role is filled by E179.

It belongs to the PanB family. In terms of assembly, homodecamer; pentamer of dimers. Requires Mg(2+) as cofactor.

The protein localises to the cytoplasm. The catalysed reaction is 3-methyl-2-oxobutanoate + (6R)-5,10-methylene-5,6,7,8-tetrahydrofolate + H2O = 2-dehydropantoate + (6S)-5,6,7,8-tetrahydrofolate. Its pathway is cofactor biosynthesis; (R)-pantothenate biosynthesis; (R)-pantoate from 3-methyl-2-oxobutanoate: step 1/2. Catalyzes the reversible reaction in which hydroxymethyl group from 5,10-methylenetetrahydrofolate is transferred onto alpha-ketoisovalerate to form ketopantoate. The sequence is that of 3-methyl-2-oxobutanoate hydroxymethyltransferase from Staphylococcus epidermidis (strain ATCC 35984 / DSM 28319 / BCRC 17069 / CCUG 31568 / BM 3577 / RP62A).